The chain runs to 384 residues: H-2 class I histocompatibility antigen, TLA(B) alpha chain (384 aa).

Residues 1–26 form the signal peptide; it reads MRMGTPVPGTLLILLAASQGQTQTCP. The interval 27–116 is alpha-1; sequence GSHSLRYFYT…MLDYYNLSQN (90 aa). Topologically, residues 27-314 are extracellular; it reads GSHSLRYFYT…TSMPNRTTVR (288 aa). N-linked (GlcNAc...) asparagine glycosylation is found at Asn63, Asn112, and Asn116. The segment at 117–208 is alpha-2; sequence GSHTIQVMYG…ENRKKTQECT (92 aa). Intrachain disulfides connect Cys127–Cys190 and Cys229–Cys285. Residues 209 to 300 are alpha-3; sequence DPPKTHVTHH…GLPEPLTLRW (92 aa). The Ig-like C1-type domain maps to 211–299; it reads PKTHVTHHPR…EGLPEPLTLR (89 aa). Positions 301–314 are connecting peptide; sequence EPPQTSMPNRTTVR. Asn309 carries an N-linked (GlcNAc...) asparagine glycan. Residues 315–334 form a helical membrane-spanning segment; that stretch reads ALLGAMIILGFMSGSVMMWM. The Cytoplasmic segment spans residues 335–384; sequence RKNNGGNGDDNTAAYQNEREHLSLDPRAESEALGVEAGMKDLPSAPPLVS. Basic and acidic residues predominate over residues 354 to 364; that stretch reads EHLSLDPRAES. A disordered region spans residues 354–384; it reads EHLSLDPRAESEALGVEAGMKDLPSAPPLVS.

The protein belongs to the MHC class I family. In terms of assembly, heterodimer of an alpha chain and a beta chain (beta-2-microglobulin). As to expression, TL antigens are only expressed on thymocytes, activated T-lymphocytes and on some thymic leukemias.

It is found in the membrane. In terms of biological role, involved in the presentation of foreign antigens to the immune system. The sequence is that of H-2 class I histocompatibility antigen, TLA(B) alpha chain (H2-T3) from Mus musculus (Mouse).